Consider the following 96-residue polypeptide: Large ribosomal subunit protein bL21 (96 aa).

A compositionally biased stretch (basic residues) spans 73–84 (KRRKRYQSRNGH). The disordered stretch occupies residues 73-96 (KRRKRYQSRNGHRQQMTQIEVVSL). Over residues 85–96 (RQQMTQIEVVSL) the composition is skewed to polar residues.

It belongs to the bacterial ribosomal protein bL21 family. In terms of assembly, part of the 50S ribosomal subunit. Contacts protein L20.

In terms of biological role, this protein binds to 23S rRNA in the presence of protein L20. This chain is Large ribosomal subunit protein bL21, found in Chlorobium luteolum (strain DSM 273 / BCRC 81028 / 2530) (Pelodictyon luteolum).